A 364-amino-acid chain; its full sequence is UDP-N-acetylglucosamine--N-acetylmuramyl-(pentapeptide) pyrophosphoryl-undecaprenol N-acetylglucosamine transferase (364 aa).

UDP-N-acetyl-alpha-D-glucosamine is bound by residues 10-12 (TGG), asparagine 124, arginine 166, serine 196, and glutamine 297.

This sequence belongs to the glycosyltransferase 28 family. MurG subfamily.

It is found in the cell membrane. The catalysed reaction is di-trans,octa-cis-undecaprenyl diphospho-N-acetyl-alpha-D-muramoyl-L-alanyl-D-glutamyl-meso-2,6-diaminopimeloyl-D-alanyl-D-alanine + UDP-N-acetyl-alpha-D-glucosamine = di-trans,octa-cis-undecaprenyl diphospho-[N-acetyl-alpha-D-glucosaminyl-(1-&gt;4)]-N-acetyl-alpha-D-muramoyl-L-alanyl-D-glutamyl-meso-2,6-diaminopimeloyl-D-alanyl-D-alanine + UDP + H(+). It participates in cell wall biogenesis; peptidoglycan biosynthesis. In terms of biological role, cell wall formation. Catalyzes the transfer of a GlcNAc subunit on undecaprenyl-pyrophosphoryl-MurNAc-pentapeptide (lipid intermediate I) to form undecaprenyl-pyrophosphoryl-MurNAc-(pentapeptide)GlcNAc (lipid intermediate II). The protein is UDP-N-acetylglucosamine--N-acetylmuramyl-(pentapeptide) pyrophosphoryl-undecaprenol N-acetylglucosamine transferase of Caldanaerobacter subterraneus subsp. tengcongensis (strain DSM 15242 / JCM 11007 / NBRC 100824 / MB4) (Thermoanaerobacter tengcongensis).